A 244-amino-acid chain; its full sequence is Small ribosomal subunit protein uS2 (244 aa).

Belongs to the universal ribosomal protein uS2 family.

The sequence is that of Small ribosomal subunit protein uS2 from Desulforudis audaxviator (strain MP104C).